Consider the following 265-residue polypeptide: Sulfur carrier protein FdhD (265 aa).

Residue Cys107 is the Cysteine persulfide intermediate of the active site.

This sequence belongs to the FdhD family.

Its subcellular location is the cytoplasm. Functionally, required for formate dehydrogenase (FDH) activity. Acts as a sulfur carrier protein that transfers sulfur from IscS to the molybdenum cofactor prior to its insertion into FDH. In Staphylococcus aureus (strain JH9), this protein is Sulfur carrier protein FdhD.